Reading from the N-terminus, the 274-residue chain is MAVIKLKPTTPGQRGTVKVTRDHLHKGAGFAPLLEPQHQKSGRNNNGHITTRHKGGGHKHHYRVVDFKRTKDGIPAKVERIEYDPNRTAHIALVCYADGERRYIIAPRNLEVGATIVSGSEAPIRVGNTLPIRNIPVGSTIHCIELKIGAGAQIARSAGTSATLLAREGIYAQVRMRSGEVRKVHIECRATIGEVANEEHSLRRLGKAGVKRWMGIRPTVRGVVMNPVDHPHGGGEGKTGEGRHAVDPWGNLTKGYRTRNNKRTQSMIVSRRKK.

Disordered regions lie at residues 35–60 and 224–274; these read EPQH…GHKH and VMNP…RRKK. The segment covering 50–60 has biased composition (basic residues); the sequence is TTRHKGGGHKH. The span at 229–246 shows a compositional bias: basic and acidic residues; that stretch reads DHPHGGGEGKTGEGRHAV.

Belongs to the universal ribosomal protein uL2 family. Part of the 50S ribosomal subunit. Forms a bridge to the 30S subunit in the 70S ribosome.

In terms of biological role, one of the primary rRNA binding proteins. Required for association of the 30S and 50S subunits to form the 70S ribosome, for tRNA binding and peptide bond formation. It has been suggested to have peptidyltransferase activity; this is somewhat controversial. Makes several contacts with the 16S rRNA in the 70S ribosome. The polypeptide is Large ribosomal subunit protein uL2 (Delftia acidovorans (strain DSM 14801 / SPH-1)).